We begin with the raw amino-acid sequence, 601 residues long: Proteasome-associated ATPase (601 aa).

The span at 1–15 (MSGPRSGSGSGGSTG) shows a compositional bias: gly residues. The segment at 1–29 (MSGPRSGSGSGGSTGRPGDADSQRSAYEK) is disordered. Basic and acidic residues predominate over residues 18–29 (GDADSQRSAYEK). Residues 19–106 (DADSQRSAYE…LKEEVDRLAQ (88 aa)) are a coiled coil. Position 289 to 294 (289 to 294 (GCGKTL)) interacts with ATP. The tract at residues 600-601 (YL) is docks into pockets in the proteasome alpha-ring.

It belongs to the AAA ATPase family. As to quaternary structure, homohexamer. Assembles into a hexameric ring structure that caps the 20S proteasome core. Strongly interacts with the prokaryotic ubiquitin-like protein Pup through a hydrophobic interface; the interacting region of ARC lies in its N-terminal coiled-coil domain. There is one Pup binding site per ARC hexamer ring. Upon ATP-binding, the C-terminus of ARC interacts with the alpha-rings of the proteasome core, possibly by binding to the intersubunit pockets.

It participates in protein degradation; proteasomal Pup-dependent pathway. Functionally, ATPase which is responsible for recognizing, binding, unfolding and translocation of pupylated proteins into the bacterial 20S proteasome core particle. May be essential for opening the gate of the 20S proteasome via an interaction with its C-terminus, thereby allowing substrate entry and access to the site of proteolysis. Thus, the C-termini of the proteasomal ATPase may function like a 'key in a lock' to induce gate opening and therefore regulate proteolysis. This is Proteasome-associated ATPase from Parafrankia sp. (strain EAN1pec).